A 413-amino-acid polypeptide reads, in one-letter code: Gamma-glutamyl phosphate reductase (413 aa).

This sequence belongs to the gamma-glutamyl phosphate reductase family.

The protein resides in the cytoplasm. The catalysed reaction is L-glutamate 5-semialdehyde + phosphate + NADP(+) = L-glutamyl 5-phosphate + NADPH + H(+). It participates in amino-acid biosynthesis; L-proline biosynthesis; L-glutamate 5-semialdehyde from L-glutamate: step 2/2. Catalyzes the NADPH-dependent reduction of L-glutamate 5-phosphate into L-glutamate 5-semialdehyde and phosphate. The product spontaneously undergoes cyclization to form 1-pyrroline-5-carboxylate. The polypeptide is Gamma-glutamyl phosphate reductase (Lactococcus lactis subsp. cremoris (strain SK11)).